The chain runs to 95 residues: MLYTVSHSPYHCDLSALLRLATSEDDILLLQDGVIAALKESETLKLLLNNPASLFVLEDDVIARGLVGQISDNATLISYTHFVDLTLRHQQQLAW.

It belongs to the DsrH/TusB family. As to quaternary structure, heterohexamer, formed by a dimer of trimers. The hexameric TusBCD complex contains 2 copies each of TusB, TusC and TusD. The TusBCD complex interacts with TusE.

The protein resides in the cytoplasm. Functionally, part of a sulfur-relay system required for 2-thiolation of 5-methylaminomethyl-2-thiouridine (mnm(5)s(2)U) at tRNA wobble positions. This is Protein TusB from Yersinia pseudotuberculosis serotype O:1b (strain IP 31758).